A 410-amino-acid polypeptide reads, in one-letter code: Aspartate aminotransferase (410 aa).

L-aspartate is bound by residues Gly47, Trp135, and Asn185. Lys249 carries the N6-(pyridoxal phosphate)lysine modification. Arg385 contacts L-aspartate.

It belongs to the class-I pyridoxal-phosphate-dependent aminotransferase family. In terms of assembly, homodimer. The cofactor is pyridoxal 5'-phosphate.

It localises to the cytoplasm. It catalyses the reaction L-aspartate + 2-oxoglutarate = oxaloacetate + L-glutamate. Its function is as follows. Catalyzes the reversible conversion of aspartate and 2-oxoglutarate to glutamate and oxaloacetate. The chain is Aspartate aminotransferase from Rhizobium meliloti (Ensifer meliloti).